The sequence spans 481 residues: ATP synthase subunit beta, chloroplastic (481 aa).

161 to 168 (GGAGVGKT) is a binding site for ATP.

Belongs to the ATPase alpha/beta chains family. In terms of assembly, F-type ATPases have 2 components, CF(1) - the catalytic core - and CF(0) - the membrane proton channel. CF(1) has five subunits: alpha(3), beta(3), gamma(1), delta(1), epsilon(1). CF(0) has four main subunits: a(1), b(1), b'(1) and c(9-12).

It localises to the plastid. The protein localises to the chloroplast thylakoid membrane. The catalysed reaction is ATP + H2O + 4 H(+)(in) = ADP + phosphate + 5 H(+)(out). Functionally, produces ATP from ADP in the presence of a proton gradient across the membrane. The catalytic sites are hosted primarily by the beta subunits. The chain is ATP synthase subunit beta, chloroplastic from Mesostigma viride (Green alga).